The chain runs to 597 residues: Electron transfer flavoprotein-ubiquinone oxidoreductase, mitochondrial (597 aa).

An FAD-binding site is contributed by 53 to 67 (VVIVGGGPSGLSAAI). Residues 91-112 (IGGHTLSGAVIETRALDELIPN) lie within the membrane without spanning it. A ubiquinone is bound by residues Gly-285 and Gly-286. The stretch at 409 to 426 (IDPATYDKNIRDTYVVKE) is an intramembrane region. Residues Cys-540, Cys-566, Cys-569, and Cys-572 each coordinate [4Fe-4S] cluster. One can recognise a 4Fe-4S ferredoxin-type domain in the interval 557 to 586 (KRLQINAQNCIHCKTCDIKDPQQNINWVTP).

This sequence belongs to the ETF-QO/FixC family. As to quaternary structure, monomer. Requires [4Fe-4S] cluster as cofactor. FAD is required as a cofactor.

It localises to the mitochondrion inner membrane. It catalyses the reaction a ubiquinone + reduced [electron-transfer flavoprotein] = a ubiquinol + oxidized [electron-transfer flavoprotein] + H(+). Functionally, accepts electrons from ETF and reduces ubiquinone. This Caenorhabditis elegans protein is Electron transfer flavoprotein-ubiquinone oxidoreductase, mitochondrial (let-721).